Consider the following 289-residue polypeptide: Protease HtpX homolog (289 aa).

2 helical membrane passes run Leu5–Ile27 and Ala40–Asn60. Residue His133 participates in Zn(2+) binding. The active site involves Glu134. Residue His137 participates in Zn(2+) binding. 2 helical membrane-spanning segments follow: residues Thr143–Ala163 and Ile181–Ala201. Position 207 (Glu207) interacts with Zn(2+).

The protein belongs to the peptidase M48B family. Zn(2+) serves as cofactor.

It is found in the cell membrane. This Pyrococcus furiosus (strain ATCC 43587 / DSM 3638 / JCM 8422 / Vc1) protein is Protease HtpX homolog.